The following is a 431-amino-acid chain: GDP-L-galactose phosphorylase 2 (431 aa).

H235 functions as the Tele-GMP-histidine intermediate in the catalytic mechanism. The segment covering 398 to 407 (EEEEEEELEE) has biased composition (acidic residues). Residues 398–417 (EEEEEEELEEQNSMNGGSFT) are disordered.

Belongs to the GDPGP1 family. Interacts with TLP1. In terms of tissue distribution, expressed in leaves, stems, roots, flowers and siliques.

The protein localises to the cytoplasm. Its subcellular location is the nucleus. It carries out the reaction GDP-beta-L-galactose + phosphate = beta-L-galactose 1-phosphate + GDP + H(+). Its pathway is cofactor biosynthesis; L-ascorbate biosynthesis via GDP-alpha-D-mannose pathway; L-ascorbate from GDP-alpha-D-mannose: step 2/5. In terms of biological role, catalyzes a reaction of the Smirnoff-Wheeler pathway, the major route to ascorbate biosynthesis in plants. Acts as a phosphorylase rather than as a transferase. Uses preferentially GDP-L-galactose and GDP-D-glucose as substrates. Lower activity with GDP-L-fucose, very low activity with GDP-D-mannose, and no activity with UDP-D-glucose, UDP-D-galactose or ADP-D-glucose. Highly specific for inorganic phosphate as the guanylyl acceptor. The polypeptide is GDP-L-galactose phosphorylase 2 (VTC5) (Arabidopsis thaliana (Mouse-ear cress)).